Here is a 210-residue protein sequence, read N- to C-terminus: Synaptosomal-associated protein 25 (210 aa).

The segment at 1–23 is disordered; the sequence is MENSVENSMDPRSEQEEMQRCAD. Residues 9–20 show a composition bias toward basic and acidic residues; sequence MDPRSEQEEMQR. T-SNARE coiled-coil homology domains lie at 23–85 and 147–209; these read DQIT…LSDL and DARE…ATKM.

It belongs to the SNAP-25 family.

Its subcellular location is the synapse. The protein localises to the synaptosome. The protein resides in the cell membrane. May play an important role in the synaptic function of specific neuronal systems. Associates with proteins involved in vesicle docking and membrane fusion. This is Synaptosomal-associated protein 25 (snap25) from Torpedo marmorata (Marbled electric ray).